The sequence spans 231 residues: Somatolactin (231 aa).

The first 24 residues, 1–24 (MNMMTVKQQGVWAALLWPYLLTAS), serve as a signal peptide directing secretion. 3 cysteine pairs are disulfide-bonded: C29-C39, C89-C205, and C222-C230. N-linked (GlcNAc...) asparagine glycosylation occurs at N145.

The protein belongs to the somatotropin/prolactin family. As to expression, pituitary gland.

It localises to the secreted. The polypeptide is Somatolactin (Paralichthys olivaceus (Bastard halibut)).